The following is a 236-amino-acid chain: Factor V activator RVV-V alpha (236 aa).

A Peptidase S1 domain is found at 1–227 (VVGGDECNIN…YNNWIQNIIA (227 aa)). 6 cysteine pairs are disulfide-bonded: C7–C141, C28–C44, C76–C234, C120–C188, C152–C167, and C178–C203. Residues H43 and D88 each act as charge relay system in the active site. Catalysis depends on S182, which acts as the Charge relay system. N229 is a glycosylation site (N-linked (GlcNAc...) asparagine).

This sequence belongs to the peptidase S1 family. Snake venom subfamily. Monomer. As to expression, expressed by the venom gland.

The protein localises to the secreted. The catalysed reaction is Fully activates human clotting factor V by a single cleavage at the 1545-Trp-Tyr-Leu-Arg-|-Ser-Asn-Asn-Gly-1552 bond. Cattle, but not rabbit, factor V is cleaved, and no other proteins of the clotting system are attacked. Esterase activity is observed on Bz-Arg-OEt and Tos-Arg-OMe, and amidase activity on Phe-pipecolyl-Arg-NHPhNO2.. With respect to regulation, inhibited by D-Phe-Pro-Arg-chloromethyl ketone (FPRCK) (97%), PMSF (76%), and benzamidine (50%). Is not inhibited by BPTI, antithrombin and EDTA. Its function is as follows. Venom serine protease that activates factor V (F5) in a calcium-independent manner. It cleaves the Arg(1545)-Ser(1546) linkage in the human factor V molecule. Induces the coagulation of mammalian plasma. The polypeptide is Factor V activator RVV-V alpha (Daboia siamensis (Eastern Russel's viper)).